The primary structure comprises 55 residues: Protein CADMIUM TOLERANCE 1 (55 aa).

Residues 24-40 traverse the membrane as a helical segment; it reads GCLYACIFTALCCFCCY.

This sequence belongs to the CYSTM1 family.

The protein resides in the cell membrane. It is found in the secreted. Its subcellular location is the cell wall. Confers resistance to heavy metal ions (e.g. cadmium (CdCl(2)) and copper (CuCl(2))) by chelating them at the plasma membrane of root cells, thus stopping their entry and reducing their accumulation. The chain is Protein CADMIUM TOLERANCE 1 from Digitaria ciliaris (Southern crabgrass).